We begin with the raw amino-acid sequence, 729 residues long: Solute carrier family 15 member 2 (729 aa).

Positions 1–34 (MNPFQKNESKETLFSPVSIEEVPPRPPSPPKKPS) are disordered. The Cytoplasmic segment spans residues 1–57 (MNPFQKNESKETLFSPVSIEEVPPRPPSPPKKPSPTICGSNYPLSIAFIVVNEFCER). S9 carries the post-translational modification Phosphoserine. A Phosphothreonine modification is found at T12. A compositionally biased stretch (pro residues) spans 24–33 (PRPPSPPKKP). S28 carries the phosphoserine modification. A helical membrane pass occupies residues 58–78 (FSYYGMKAVLILYFLYFLHWN). At 79 to 83 (EDTST) the chain is on the extracellular side. Residues 84–104 (SIYHAFSSLCYFTPILGAAIA) form a helical membrane-spanning segment. Residues 105 to 113 (DSWLGKFKT) are Cytoplasmic-facing. Residues 114–134 (IIYLSLVYVLGHVIKSLGALP) form a helical membrane-spanning segment. Residues 135 to 139 (ILGGQ) are Extracellular-facing. A helical membrane pass occupies residues 140 to 160 (VVHTVLSLIGLSLIALGTGGI). Topologically, residues 161–183 (KPCVAAFGGDQFEEKHAEERTRY) are cytoplasmic. The chain crosses the membrane as a helical span at residues 184 to 204 (FSVFYLSINAGSLISTFITPM). Topologically, residues 205–217 (LRGDVQCFGEDCY) are extracellular. A helical membrane pass occupies residues 218–238 (ALAFGVPGLLMVIALVVFAMG). The Cytoplasmic segment spans residues 239–295 (SKIYNKPPPEGNIVAQVFKCIWFAISNRFKNRSGDIPKRQHWLDWAAEKYPKQLIMD). The helical transmembrane segment at 296 to 316 (VKALTRVLFLYIPLPMFWALL) threads the bilayer. Residues 317–343 (DQQGSRWTLQAIRMNRNLGFFVLQPDQ) are Extracellular-facing. Residues 344–364 (MQVLNPLLVLIFIPLFDFVIY) traverse the membrane as a helical segment. The Cytoplasmic segment spans residues 365-380 (RLVSKCGINFSSLRKM). Residues 381 to 401 (AVGMILACLAFAVAAAVEIKI) traverse the membrane as a helical segment. Over 402–611 (NEMAPAQPGP…PANKMSIAWQ (210 aa)) the chain is Extracellular. The extracellular domain (ECD) stretch occupies residues 402-611 (NEMAPAQPGP…PANKMSIAWQ (210 aa)). N435, N472, N528, N567, and N587 each carry an N-linked (GlcNAc...) asparagine glycan. Residues 612–632 (LPQYALVTAGEVMFSVTGLEF) traverse the membrane as a helical segment. Over 633–643 (SYSQAPSSMKS) the chain is Cytoplasmic. Residues 644-664 (VLQAAWLLTIAVGNIIVLVVA) traverse the membrane as a helical segment. The Extracellular segment spans residues 665-674 (QFSGLVQWAE). Residues 675–695 (FILFSCLLLVICLIFSIMGYY) form a helical membrane-spanning segment. Topologically, residues 696–729 (YVPVKTEDMRGPADKHIPHIQGNMIKLETKKTKL) are cytoplasmic.

This sequence belongs to the major facilitator superfamily. Proton-dependent oligopeptide transporter (POT/PTR) (TC 2.A.17) family. Interacts (via extracellular domain region) with trypsin. In terms of tissue distribution, expressed in kidney. Not detected in intestine. Highly expressed in macrophages.

The protein localises to the apical cell membrane. It is found in the cytoplasmic vesicle. It localises to the phagosome membrane. Its subcellular location is the cell membrane. The catalysed reaction is a dipeptide(out) + 2 H(+)(out) = a dipeptide(in) + 2 H(+)(in). The enzyme catalyses N-acetyl-D-muramoyl-L-alanyl-D-isoglutamine(out) + 3 H(+)(out) = N-acetyl-D-muramoyl-L-alanyl-D-isoglutamine(in) + 3 H(+)(in). It catalyses the reaction glycyl-L-leucine(out) + 2 H(+)(out) = glycyl-L-leucine(in) + 2 H(+)(in). It carries out the reaction glycyl-L-lysine(out) + 2 H(+)(out) = glycyl-L-lysine(in) + 2 H(+)(in). The catalysed reaction is glycyl-L-glutamate(out) + 3 H(+)(out) = glycyl-L-glutamate(in) + 3 H(+)(in). The enzyme catalyses L-alanyl-L-alanine(out) + 2 H(+)(out) = L-alanyl-L-alanine(in) + 2 H(+)(in). It catalyses the reaction an L-amino acid tripeptide(out) + 2 H(+)(out) = an L-amino acid tripeptide(in) + 2 H(+)(in). It carries out the reaction carnosine(out) + 2 H(+)(out) = carnosine(in) + 2 H(+)(in). Proton-coupled amino-acid transporter that transports oligopeptides of 2 to 4 amino acids with a preference for dipeptides. Transports neutral and anionic dipeptides with a proton to peptide stoichiometry of 2:1 or 3:1. In kidney, involved in the absorption of circulating di- and tripeptides from the glomerular filtrate. Can also transport beta-lactam antibiotics, such as the aminocephalosporin cefadroxil, and other antiviral and anticancer drugs. Transports the dipeptide-like aminopeptidase inhibitor bestatin. Also able to transport carnosine. Involved in innate immunity by promoting the detection of microbial pathogens by NOD-like receptors (NLRs). Mediates transport of bacterial peptidoglycans across the plasma membrane or, in macrophages, the phagosome membrane: catalyzes the transport of certain bacterial peptidoglycans, such as muramyl dipeptide (MDP), the NOD2 ligand. This is Solute carrier family 15 member 2 from Homo sapiens (Human).